The following is a 346-amino-acid chain: KH domain-containing, RNA-binding, signal transduction-associated protein 3 (346 aa).

Positions 1 to 160 (MEEKYLPELM…IKKFLIPDYN (160 aa)) are involved in homodimerization. Lys4 is covalently cross-linked (Glycyl lysine isopeptide (Lys-Gly) (interchain with G-Cter in SUMO2)). Residues 61 to 127 (LIPVKQFPKF…AKYFHLNDDL (67 aa)) form the KH domain. Disordered stretches follow at residues 212 to 266 (RPVA…QETY) and 317 to 346 (GQEE…YGRY). A compositionally biased stretch (pro residues) spans 253–262 (GYRPPPPPPT).

Belongs to the KHDRBS family. Self-associates to form homooligomers; dimerization increases RNA affinity. Interacts with KHDRBS2/SLM-1. Interacts with KHDRBS1/SAM68; heterooligomer formation of KHDRBS family proteins may modulate RNA substrate specificity. Interacts with the splicing regulatory proteins SFRS9, SAFB and YTHDC1. Interacts with HNRPL, RBMX, p85 subunit of PI3-kinase, SERPINB5. Post-translationally, phosphorylated on tyrosine residues by PTK6. Highly expressed in testis and brain. In adult cerebellum expressed predominantly in internal granular layer interneurons and in hippocampus is exclusively expressed in CA neurons; expression is restricted to neuronal subpopulations largely non-overlapping with expression of KHDRBS2/SLM-1.

It localises to the nucleus. Its function is as follows. RNA-binding protein that plays a role in the regulation of alternative splicing and influences mRNA splice site selection and exon inclusion. Binds preferentially to the 5'-[AU]UAAA-3' motif in vitro. Binds optimally to RNA containing 5'-[AU]UAA-3' as a bipartite motif spaced by more than 15 nucleotides. Binds poly(A). RNA-binding abilities are down-regulated by tyrosine kinase PTK6. Involved in splice site selection of vascular endothelial growth factor. In vitro regulates CD44 alternative splicing by direct binding to purine-rich exonic enhancer. Can regulate alternative splicing of neurexins NRXN1-3 in the laminin G-like domain 6 containing the evolutionary conserved neurexin alternative spliced segment 4 (AS4) involved in neurexin selective targeting to postsynaptic partners such as neuroligins and LRRTM family members. High concentrations in forebrain structures block splicing inclusion of NRXN1-3 AS4 exons while low concentrations favor their inclusion. Targeted, cell-type specific splicing regulation of NRXN1 at AS4 is involved in neuronal glutamatergic synapse function and plasticity and is linked to behavioral aspects. Regulates expression of KHDRBS2/SLIM-1 in defined neuron populations in the hippocampus by modifying its alternative splicing resulting in a transcript predicted to undergo nonsense-mediated decay. Can bind FABP9 mRNA. May play a role as a negative regulator of cell growth. Inhibits cell proliferation. In Mus musculus (Mouse), this protein is KH domain-containing, RNA-binding, signal transduction-associated protein 3 (Khdrbs3).